Here is a 120-residue protein sequence, read N- to C-terminus: Small ribosomal subunit protein uS13 (120 aa).

Positions 92 to 120 (HRKGLPVRGQTTKNNARTRKGKKKTVGSK) are disordered. A compositionally biased stretch (basic residues) spans 107-120 (ARTRKGKKKTVGSK).

This sequence belongs to the universal ribosomal protein uS13 family. In terms of assembly, part of the 30S ribosomal subunit. Forms a loose heterodimer with protein S19. Forms two bridges to the 50S subunit in the 70S ribosome.

Located at the top of the head of the 30S subunit, it contacts several helices of the 16S rRNA. In the 70S ribosome it contacts the 23S rRNA (bridge B1a) and protein L5 of the 50S subunit (bridge B1b), connecting the 2 subunits; these bridges are implicated in subunit movement. Contacts the tRNAs in the A and P-sites. This is Small ribosomal subunit protein uS13 from Helicobacter pylori (strain J99 / ATCC 700824) (Campylobacter pylori J99).